The sequence spans 38 residues: Alpha-conotoxin PeIA (38 aa).

Positions 1–21 are excised as a propeptide; the sequence is FDGRNAAANDKASDLVALTVR. 2 disulfide bridges follow: Cys-23–Cys-29 and Cys-24–Cys-37. Residues 25–27 are ser-Xaa-Pro motif, crucial for potent interaction with nAChR; it reads SHP. Cysteine amide is present on Cys-37.

It belongs to the conotoxin A superfamily. In terms of processing, the hydroxylation at position Pro-27 is critical, since an hydroxylation at this position decreases potency of the toxin to inhibit both alpha-3-beta-2 (1300-fold) and alpha-6/alpha-3-beta-2-beta-3 (130-fold) nAChRs. Post-translationally, a non-modified residue at position Pro-34 is critical, since a hydroxylation at this position decreases potency of the toxin to inhibit alpha-3-beta-2 (1-45-fold) and increases potency to inhibit alpha-6/alpha-3-beta-2-beta-3 (1.77-fold) nAChRs. Expressed by the venom duct.

Its subcellular location is the secreted. Functionally, alpha-conotoxins act on postsynaptic membranes, they bind to the nicotinic acetylcholine receptors (nAChR) and thus inhibit them. This synthetic peptide potently and reversibly blocks alpha-9-alpha-10/CHRNA9-CHRNA10 nAChR (IC(50)=6.9-54.9 nM), alpha-3-beta-2/CHRNA3-CHRNB2 (IC(50)=9.7-97.5 nM) and alpha-6/alpha-3-beta-2-beta-3 (CHRNA6/CHRNA3-CHRNB2-CHRNB3) (IC(50)=11.1-17.2 nM). It also inhibits alpha-6/alpha-3-beta-4 (CHRNA6/CHRNA3-CHRNB4) nAChR with a higher potency on human (IC(50)=6.75 nM) than on rat receptors (IC(50)=130-147 nM). Also shows a weak ability to inhibit alpha-3-beta-4/CHRNA3-CHRNB4 (IC(50)=480-1500 nM). This synthetic toxin also inhibits N-type calcium channels (Ca2.2/CACNA1B) (IC(50)=1.1 nM) via the activation of the G protein-coupled GABA(B) receptor in DRG neurons. Also exhibits inhibition of D.melanogaster alpha-7/CHRNA7 nAChRs. This Conus pergrandis (Grand cone) protein is Alpha-conotoxin PeIA.